We begin with the raw amino-acid sequence, 206 residues long: LexA repressor (206 aa).

The H-T-H motif DNA-binding region spans 28-48; the sequence is RAEIASELGFKSANAAEEHLK. Catalysis depends on for autocatalytic cleavage activity residues serine 122 and lysine 160.

It belongs to the peptidase S24 family. As to quaternary structure, homodimer.

The catalysed reaction is Hydrolysis of Ala-|-Gly bond in repressor LexA.. Its function is as follows. Represses a number of genes involved in the response to DNA damage (SOS response), including recA and lexA. In the presence of single-stranded DNA, RecA interacts with LexA causing an autocatalytic cleavage which disrupts the DNA-binding part of LexA, leading to derepression of the SOS regulon and eventually DNA repair. The chain is LexA repressor from Tolumonas auensis (strain DSM 9187 / NBRC 110442 / TA 4).